The sequence spans 894 residues: GTPase-activating protein GYP5 (894 aa).

A compositionally biased stretch (basic and acidic residues) spans 1–23 (MSSDKSIEKNTDTIASEVHEGDN). The interval 1 to 324 (MSSDKSIEKN…VPPPLEEEMK (324 aa)) is disordered. Phosphoserine is present on residues serine 25 and serine 30. Phosphothreonine is present on threonine 89. Over residues 134–164 (IEKEYDAVKENEKVYADTKEVVSSPENREVT) the composition is skewed to basic and acidic residues. 2 stretches are compositionally biased toward polar residues: residues 184-200 (GTTT…SSEV) and 268-279 (SSENEVSAIPTT). Position 389 is a phosphoserine (serine 389). A Rab-GAP TBC domain is found at 451 to 630 (GIPPQIRGII…RIFDIVFVEG (180 aa)). A coiled-coil region spans residues 732-872 (EKEQKKEDHY…INKEQVSTAS (141 aa)).

The protein belongs to the GYP5 family. In terms of assembly, interacts with GYL1 and RVS167; and is part of SEC4-containing complexes.

Its subcellular location is the cytoplasm. The protein resides in the bud. It localises to the bud neck. Functionally, GTPase-activating protein which accelerates the GTP hydrolysis rate of YPT1 and SEC4. Involved in ER to Golgi trafficking and polarized exocytosis. This is GTPase-activating protein GYP5 (GYP5) from Saccharomyces cerevisiae (strain ATCC 204508 / S288c) (Baker's yeast).